We begin with the raw amino-acid sequence, 632 residues long: Cytoplasmic polyadenylation element-binding protein 3 (632 aa).

Residues 1 to 11 (MQDDLLMDKSK) show a composition bias toward basic and acidic residues. Disordered regions lie at residues 1–89 (MQDD…TGGS) and 127–212 (FSPQ…RRAV). The span at 13–48 (QQRQQPQQPPSSQTQQQQKEAASVAEPPSSRESSPP) shows a compositional bias: low complexity. 2 stretches are compositionally biased toward polar residues: residues 65–89 (SFQQ…TGGS) and 135–169 (HQTQ…LTNK). Residues 170 to 193 (PSSSPNSSSPSPSNWNNQQNAAWN) show a composition bias toward low complexity. RRM domains follow at residues 375–466 (RKVF…PWNL) and 483–565 (KTIF…PYVL).

This sequence belongs to the RRM CPEB family. As to quaternary structure, following synaptic activity, forms amyloid-like oligomers. Aggregation requires an intact actin cytoskeleton. In embryos, expressed in the central nervous system, and intermediate and distal pronephric tubule segments of the embryonic kidney.

The protein resides in the cytoplasm. Its subcellular location is the nucleus. The protein localises to the synapse. It localises to the cell projection. It is found in the dendrite. The protein resides in the postsynaptic density. In terms of biological role, sequence-specific RNA-binding protein which acts as a translational repressor in the basal unstimulated state but, following neuronal stimulation, acts as a translational activator. Does not bind to the cytoplasmic polyadenylation element (CPE), a uridine-rich sequence element within the mRNA 3'-UTR, but binds to a U-rich loop within a stem-loop structure. Required for the consolidation and maintenance of hippocampal-based long term memory. Inhibits differentiation of intermediate mesoderm from an early stage to inhibit pronephric differentiation but induce neural differentiation. The chain is Cytoplasmic polyadenylation element-binding protein 3 (cpeb3) from Xenopus tropicalis (Western clawed frog).